The sequence spans 359 residues: Protein RecA (359 aa).

Residue 74–81 coordinates ATP; sequence GPESSGKT.

The protein belongs to the RecA family.

It localises to the cytoplasm. In terms of biological role, can catalyze the hydrolysis of ATP in the presence of single-stranded DNA, the ATP-dependent uptake of single-stranded DNA by duplex DNA, and the ATP-dependent hybridization of homologous single-stranded DNAs. It interacts with LexA causing its activation and leading to its autocatalytic cleavage. In Anaplasma marginale (strain St. Maries), this protein is Protein RecA.